We begin with the raw amino-acid sequence, 93 residues long: Toxin RelE1 (93 aa).

This sequence belongs to the RelE toxin family.

Its function is as follows. Toxic component of a type II toxin-antitoxin (TA) system. Its toxic effect is neutralized by coexpression with cognate antitoxin RelB1 but no other ParD or RelB antitoxin. The protein is Toxin RelE1 (relE1) of Caulobacter vibrioides (strain ATCC 19089 / CIP 103742 / CB 15) (Caulobacter crescentus).